The following is a 254-amino-acid chain: 5-oxoprolinase subunit A (254 aa).

Belongs to the LamB/PxpA family. As to quaternary structure, forms a complex composed of PxpA, PxpB and PxpC.

It carries out the reaction 5-oxo-L-proline + ATP + 2 H2O = L-glutamate + ADP + phosphate + H(+). Functionally, catalyzes the cleavage of 5-oxoproline to form L-glutamate coupled to the hydrolysis of ATP to ADP and inorganic phosphate. In Burkholderia orbicola (strain MC0-3), this protein is 5-oxoprolinase subunit A.